The sequence spans 260 residues: Type III pantothenate kinase (260 aa).

Residue 6–13 (DSGNTNIV) coordinates ATP. 108-111 (GADR) lines the substrate pocket. Aspartate 110 functions as the Proton acceptor in the catalytic mechanism. Aspartate 130 lines the K(+) pocket. Residue threonine 133 participates in ATP binding. Position 185 (threonine 185) interacts with substrate.

Belongs to the type III pantothenate kinase family. As to quaternary structure, homodimer. NH4(+) is required as a cofactor. K(+) serves as cofactor.

It localises to the cytoplasm. The catalysed reaction is (R)-pantothenate + ATP = (R)-4'-phosphopantothenate + ADP + H(+). The protein operates within cofactor biosynthesis; coenzyme A biosynthesis; CoA from (R)-pantothenate: step 1/5. Its function is as follows. Catalyzes the phosphorylation of pantothenate (Pan), the first step in CoA biosynthesis. The polypeptide is Type III pantothenate kinase (Paramagnetospirillum magneticum (strain ATCC 700264 / AMB-1) (Magnetospirillum magneticum)).